Reading from the N-terminus, the 963-residue chain is Phosphoenolpyruvate carboxylase (963 aa).

Ser11 carries the phosphoserine modification. Catalysis depends on residues His172 and Lys600.

It belongs to the PEPCase type 1 family. Homotetramer. Mg(2+) serves as cofactor.

It localises to the cytoplasm. It carries out the reaction oxaloacetate + phosphate = phosphoenolpyruvate + hydrogencarbonate. Its activity is regulated as follows. By light-reversible phosphorylation. Its function is as follows. Through the carboxylation of phosphoenolpyruvate (PEP) it forms oxaloacetate, a four-carbon dicarboxylic acid source for the tricarboxylic acid cycle. This Picea abies (Norway spruce) protein is Phosphoenolpyruvate carboxylase (PPC).